A 337-amino-acid polypeptide reads, in one-letter code: Ribosomal RNA small subunit methyltransferase H (337 aa).

S-adenosyl-L-methionine-binding positions include 36 to 38, Asp56, Phe82, Asp100, and Gln107; that span reads GGH. Residues 315 to 337 are disordered; it reads LEERSKRIPNPQSPIPASQGDAQ.

Belongs to the methyltransferase superfamily. RsmH family.

The protein resides in the cytoplasm. The catalysed reaction is cytidine(1402) in 16S rRNA + S-adenosyl-L-methionine = N(4)-methylcytidine(1402) in 16S rRNA + S-adenosyl-L-homocysteine + H(+). Functionally, specifically methylates the N4 position of cytidine in position 1402 (C1402) of 16S rRNA. In Xanthomonas euvesicatoria pv. vesicatoria (strain 85-10) (Xanthomonas campestris pv. vesicatoria), this protein is Ribosomal RNA small subunit methyltransferase H.